We begin with the raw amino-acid sequence, 437 residues long: uncharacterized protein (437 aa).

This is an uncharacterized protein from Rhodococcus erythropolis (Arthrobacter picolinophilus).